The chain runs to 452 residues: Methionine aminopeptidase 2 (452 aa).

The interval 1 to 96 (MAVQALPEIN…VPLSTLFPNN (96 aa)) is disordered. Positions 18 to 35 (GAANAAAKGQAAQGTAGN) are enriched in low complexity. The segment covering 36 to 53 (DDAENDESDEDKEDEQEV) has biased composition (acidic residues). The segment covering 62-77 (GKKKKKKTKKKKKKGT) has biased composition (basic residues). Residue H202 participates in substrate binding. D222, D233, and H302 together coordinate a divalent metal cation. Residue H310 participates in substrate binding. A divalent metal cation is bound by residues E338 and E433.

This sequence belongs to the peptidase M24A family. Methionine aminopeptidase eukaryotic type 2 subfamily. The cofactor is Co(2+). Requires Zn(2+) as cofactor. Mn(2+) is required as a cofactor. Fe(2+) serves as cofactor.

Its subcellular location is the cytoplasm. The enzyme catalyses Release of N-terminal amino acids, preferentially methionine, from peptides and arylamides.. Functionally, cotranslationally removes the N-terminal methionine from nascent proteins. The N-terminal methionine is often cleaved when the second residue in the primary sequence is small and uncharged (Met-Ala-, Cys, Gly, Pro, Ser, Thr, or Val). The chain is Methionine aminopeptidase 2 from Coccidioides posadasii (strain C735) (Valley fever fungus).